Reading from the N-terminus, the 85-residue chain is Large ribosomal subunit protein bL27 (85 aa).

A disordered region spans residues 1–22 (MAHKKAGGSTRNGRDSESKRLG).

It belongs to the bacterial ribosomal protein bL27 family.

In Aliivibrio salmonicida (strain LFI1238) (Vibrio salmonicida (strain LFI1238)), this protein is Large ribosomal subunit protein bL27.